A 264-amino-acid chain; its full sequence is S-adenosylmethionine decarboxylase proenzyme (264 aa).

The active-site Schiff-base intermediate with substrate; via pyruvic acid is the Ser113. Ser113 carries the pyruvic acid (Ser); by autocatalysis modification. Residue His118 is the Proton acceptor; for processing activity of the active site. The active-site Proton donor; for catalytic activity is Cys141.

Belongs to the prokaryotic AdoMetDC family. Type 2 subfamily. In terms of assembly, heterooctamer of four alpha and four beta chains arranged as a tetramer of alpha/beta heterodimers. It depends on pyruvate as a cofactor. Post-translationally, is synthesized initially as an inactive proenzyme. Formation of the active enzyme involves a self-maturation process in which the active site pyruvoyl group is generated from an internal serine residue via an autocatalytic post-translational modification. Two non-identical subunits are generated from the proenzyme in this reaction, and the pyruvate is formed at the N-terminus of the alpha chain, which is derived from the carboxyl end of the proenzyme. The post-translation cleavage follows an unusual pathway, termed non-hydrolytic serinolysis, in which the side chain hydroxyl group of the serine supplies its oxygen atom to form the C-terminus of the beta chain, while the remainder of the serine residue undergoes an oxidative deamination to produce ammonia and the pyruvoyl group blocking the N-terminus of the alpha chain.

It catalyses the reaction S-adenosyl-L-methionine + H(+) = S-adenosyl 3-(methylsulfanyl)propylamine + CO2. Its pathway is amine and polyamine biosynthesis; S-adenosylmethioninamine biosynthesis; S-adenosylmethioninamine from S-adenosyl-L-methionine: step 1/1. Its function is as follows. Catalyzes the decarboxylation of S-adenosylmethionine to S-adenosylmethioninamine (dcAdoMet), the propylamine donor required for the synthesis of the polyamines spermine and spermidine from the diamine putrescine. The protein is S-adenosylmethionine decarboxylase proenzyme of Azotobacter vinelandii (strain DJ / ATCC BAA-1303).